A 179-amino-acid polypeptide reads, in one-letter code: Replication restart protein DnaT (179 aa).

The required for trimerization and to bind PriB stretch occupies residues 1–83; that stretch reads MSSRILTSHF…FEEPAAAPVA (83 aa). A binds ssDNA region spans residues 84–179; the sequence is VPMGKFAMYA…DSHIPRGFRG (96 aa). Residues 151-179 form a disordered region; the sequence is SRASNGGQPKRDVNSVSEPDSHIPRGFRG. A compositionally biased stretch (basic and acidic residues) spans 159–173; the sequence is PKRDVNSVSEPDSHI.

It belongs to the DnaT family. Homotrimer. Interacts with PriB. Interacts with PriC. Component of the replication restart primosome. Primosome assembly occurs via a 'hand-off' mechanism. PriA binds to replication forks, subsequently PriB then DnaT bind; DnaT then displaces ssDNA to generate the helicase loading substrate.

In terms of biological role, involved in the restart of stalled replication forks, which reloads the replicative helicase on sites other than the origin of replication. Can function in multiple replication restart pathways. Displaces ssDNA from a PriB-ssDNA complex. Probably forms a spiral filament on ssDNA. Binds single-stranded (ss)DNA. The minimal binding site is about 26 +/- 2 nucleotides (nt) per trimer. Two DNA-protein complexes are seen with 55 nt-long ssDNA. The polypeptide is Replication restart protein DnaT (Klebsiella pneumoniae subsp. pneumoniae (strain ATCC 700721 / MGH 78578)).